We begin with the raw amino-acid sequence, 187 residues long: Elongation factor P (187 aa).

The protein belongs to the elongation factor P family.

It is found in the cytoplasm. Its pathway is protein biosynthesis; polypeptide chain elongation. In terms of biological role, involved in peptide bond synthesis. Stimulates efficient translation and peptide-bond synthesis on native or reconstituted 70S ribosomes in vitro. Probably functions indirectly by altering the affinity of the ribosome for aminoacyl-tRNA, thus increasing their reactivity as acceptors for peptidyl transferase. The polypeptide is Elongation factor P (Desulfosudis oleivorans (strain DSM 6200 / JCM 39069 / Hxd3) (Desulfococcus oleovorans)).